Consider the following 120-residue polypeptide: uncharacterized protein (120 aa).

Residues 63 to 83 form a helical membrane-spanning segment; that stretch reads IDMSCVICFNFSCHLFVVIFI.

The protein resides in the membrane. This is an uncharacterized protein from Saccharomyces cerevisiae (strain ATCC 204508 / S288c) (Baker's yeast).